A 366-amino-acid polypeptide reads, in one-letter code: Flagellar P-ring protein (366 aa).

An N-terminal signal peptide occupies residues 1 to 20 (MVIKFLSALILLLVTTAVQA).

It belongs to the FlgI family. In terms of assembly, the basal body constitutes a major portion of the flagellar organelle and consists of four rings (L,P,S, and M) mounted on a central rod.

Its subcellular location is the periplasm. The protein localises to the bacterial flagellum basal body. In terms of biological role, assembles around the rod to form the L-ring and probably protects the motor/basal body from shearing forces during rotation. The polypeptide is Flagellar P-ring protein (Escherichia coli O6:H1 (strain CFT073 / ATCC 700928 / UPEC)).